A 121-amino-acid chain; its full sequence is Ig heavy chain V region MPC 11 (121 aa).

One can recognise an Ig-like domain in the interval 1 to 112 (EAQLQQSGAE…NSSPYFDSWG (112 aa)).

In Mus musculus (Mouse), this protein is Ig heavy chain V region MPC 11.